The sequence spans 405 residues: MSVNKANSFRSGPDERGRFGIFGGRFVAETLMPLVLELDKAYAAAKADPAFQAEIDFMQRDYVGRPSPLYLAARLTEHFGGAKIYFKRDELNHTGSHKINNCLGQILLARRMGKTRIIAETGAGQHGVATATVCARFGLPCVIYMGTTDIERQKPNVFRMKLLGAEVVPVTSGTGTLKDAMNEALRDWVTNVENTYYLIGTVAGPHPYPAMVRDFQSVIGEETKKQMLEREGRLPDSLVACIGGGSNAMGLFHPFLDDPSVKIYGVEAAGHGLETGEHCASLKGGAPGVLHGNRTYLLQDDDGQIKDGHSISAGLDYPGIGPEHAWLHETGRAEYVSATDREALAAFQLCSKLEGIIPALEPAHALAFVTKIASALPKDHLMVMNMCGRGDKDVFAVADHLGVTL.

K98 bears the N6-(pyridoxal phosphate)lysine mark.

The protein belongs to the TrpB family. Tetramer of two alpha and two beta chains. Pyridoxal 5'-phosphate serves as cofactor.

It carries out the reaction (1S,2R)-1-C-(indol-3-yl)glycerol 3-phosphate + L-serine = D-glyceraldehyde 3-phosphate + L-tryptophan + H2O. It functions in the pathway amino-acid biosynthesis; L-tryptophan biosynthesis; L-tryptophan from chorismate: step 5/5. In terms of biological role, the beta subunit is responsible for the synthesis of L-tryptophan from indole and L-serine. In Parvibaculum lavamentivorans (strain DS-1 / DSM 13023 / NCIMB 13966), this protein is Tryptophan synthase beta chain.